The primary structure comprises 410 residues: Peptidase T (410 aa).

A Zn(2+)-binding site is contributed by histidine 78. Aspartate 80 is a catalytic residue. Aspartate 139 is a Zn(2+) binding site. The active-site Proton acceptor is the glutamate 173. Zn(2+)-binding residues include glutamate 174, aspartate 196, and histidine 378.

Belongs to the peptidase M20B family. The cofactor is Zn(2+).

The protein resides in the cytoplasm. It catalyses the reaction Release of the N-terminal residue from a tripeptide.. Its function is as follows. Cleaves the N-terminal amino acid of tripeptides. The polypeptide is Peptidase T (Shewanella woodyi (strain ATCC 51908 / MS32)).